A 217-amino-acid polypeptide reads, in one-letter code: Oxygen-insensitive NAD(P)H nitroreductase (217 aa).

Position 10 to 14 (10 to 14) interacts with FMN; that stretch reads RYSTK. The NAD(+) site is built by Lys14, Thr41, Asn71, Lys74, and Arg107. Asn71 provides a ligand contact to FMN. FMN-binding positions include 165-166 and 205-207; these read EG and KSR.

Belongs to the nitroreductase family. Homodimer. The cofactor is FMN.

Its function is as follows. Reduction of a variety of nitroaromatic compounds using NADH (and to lesser extent NADPH) as source of reducing equivalents; two electrons are transferred. Capable of reducing nitrofurazone. In Salmonella typhimurium (strain LT2 / SGSC1412 / ATCC 700720), this protein is Oxygen-insensitive NAD(P)H nitroreductase.